Reading from the N-terminus, the 385-residue chain is Probable caffeine synthase MTL1 (385 aa).

7 residues coordinate S-adenosyl-L-homocysteine: Tyr18, Cys62, Asn67, Asp101, Leu102, Ser140, and Phe141. Tyr158, Gln161, and Phe162 together coordinate caffeine. A Mg(2+)-binding site is contributed by Asn179. Thr238 is a binding site for caffeine. Residues Asp261, Phe263, and Asn264 each coordinate Mg(2+). A caffeine-binding site is contributed by Tyr369.

It belongs to the methyltransferase superfamily. Type-7 methyltransferase family. It depends on Mg(2+) as a cofactor.

It participates in alkaloid biosynthesis. Functionally, may be involved in the biosynthesis of caffeine. This chain is Probable caffeine synthase MTL1, found in Coffea canephora (Robusta coffee).